Reading from the N-terminus, the 265-residue chain is Ribosomal RNA small subunit methyltransferase A (265 aa).

The S-adenosyl-L-methionine site is built by N13, L15, G39, E59, D87, and N108.

Belongs to the class I-like SAM-binding methyltransferase superfamily. rRNA adenine N(6)-methyltransferase family. RsmA subfamily.

The protein localises to the cytoplasm. It carries out the reaction adenosine(1518)/adenosine(1519) in 16S rRNA + 4 S-adenosyl-L-methionine = N(6)-dimethyladenosine(1518)/N(6)-dimethyladenosine(1519) in 16S rRNA + 4 S-adenosyl-L-homocysteine + 4 H(+). Specifically dimethylates two adjacent adenosines (A1518 and A1519) in the loop of a conserved hairpin near the 3'-end of 16S rRNA in the 30S particle. May play a critical role in biogenesis of 30S subunits. In Aliarcobacter butzleri (strain RM4018) (Arcobacter butzleri), this protein is Ribosomal RNA small subunit methyltransferase A.